Consider the following 399-residue polypeptide: 4-hydroxyphenylpyruvate dioxygenase (399 aa).

2 consecutive VOC domains span residues 23-166 and 197-355; these read GYDH…LIER and RIDH…LFTK. Positions 200, 283, and 366 each coordinate Fe cation.

Belongs to the 4HPPD family. Requires Fe cation as cofactor.

The catalysed reaction is 3-(4-hydroxyphenyl)pyruvate + O2 = homogentisate + CO2. It participates in amino-acid degradation; L-phenylalanine degradation; acetoacetate and fumarate from L-phenylalanine: step 3/6. The sequence is that of 4-hydroxyphenylpyruvate dioxygenase (TCRP) from Coccidioides posadasii (strain C735) (Valley fever fungus).